A 37-amino-acid polypeptide reads, in one-letter code: MKVRPSVKPICEKCKIIKRGGRVMVICENPKHKQKQG.

This sequence belongs to the bacterial ribosomal protein bL36 family.

The chain is Large ribosomal subunit protein bL36 from Alkaliphilus oremlandii (strain OhILAs) (Clostridium oremlandii (strain OhILAs)).